A 372-amino-acid chain; its full sequence is Probable arabinan endo-1,5-alpha-L-arabinosidase B (372 aa).

The first 16 residues, 1–16, serve as a signal peptide directing secretion; it reads MTVLVALFCLVTWTLC. Positions 23–34 are enriched in low complexity; it reads STQGTQQPQQPE. Residues 23–52 are disordered; sequence STQGTQQPQQPEKTPHPHPQPEDAFPPTHA. Catalysis depends on Asp-59, which acts as the Proton acceptor. N-linked (GlcNAc...) asparagine glycosylation is present at Asn-120. Glu-252 serves as the catalytic Proton donor. An N-linked (GlcNAc...) asparagine glycan is attached at Asn-363.

It belongs to the glycosyl hydrolase 43 family.

The protein localises to the secreted. It carries out the reaction Endohydrolysis of (1-&gt;5)-alpha-arabinofuranosidic linkages in (1-&gt;5)-arabinans.. It participates in glycan metabolism; L-arabinan degradation. Its function is as follows. Endo-1,5-alpha-L-arabinanase involved in degradation of pectin. Its preferred substrate is linear 1,5-alpha-L-arabinan. The polypeptide is Probable arabinan endo-1,5-alpha-L-arabinosidase B (abnB) (Aspergillus fumigatus (strain CBS 144.89 / FGSC A1163 / CEA10) (Neosartorya fumigata)).